The following is a 659-amino-acid chain: Ion-translocating oxidoreductase complex subunit C (659 aa).

2 consecutive 4Fe-4S ferredoxin-type domains span residues 366–397 (TEMGLSEPEQSCIRCGLCVDACPAGLLPQQLY) and 407–436 (KARNHNLFDCIECGACAYVCPSNIPLVQYY). [4Fe-4S] cluster-binding residues include cysteine 377, cysteine 380, cysteine 383, cysteine 387, cysteine 416, cysteine 419, cysteine 422, and cysteine 426.

The protein belongs to the 4Fe4S bacterial-type ferredoxin family. RnfC subfamily. As to quaternary structure, the complex is composed of six subunits: RnfA, RnfB, RnfC, RnfD, RnfE and RnfG. [4Fe-4S] cluster is required as a cofactor.

The protein localises to the cell inner membrane. In terms of biological role, part of a membrane-bound complex that couples electron transfer with translocation of ions across the membrane. The sequence is that of Ion-translocating oxidoreductase complex subunit C from Yersinia pestis bv. Antiqua (strain Nepal516).